The following is a 617-amino-acid chain: Acetolactate synthase large subunit (617 aa).

Residue E71 coordinates thiamine diphosphate. Residues R173, 281–302 (HGTA…VGAR), and 324–343 (EIDP…VLGD) contribute to the FAD site. Residues 413–492 (QHQMWAAQHL…VKVVIVNNHW (80 aa)) form a thiamine pyrophosphate binding region. Mg(2+)-binding residues include D463 and N490.

Belongs to the TPP enzyme family. In terms of assembly, dimer of large and small chains. Mg(2+) serves as cofactor. Thiamine diphosphate is required as a cofactor.

It catalyses the reaction 2 pyruvate + H(+) = (2S)-2-acetolactate + CO2. It participates in amino-acid biosynthesis; L-isoleucine biosynthesis; L-isoleucine from 2-oxobutanoate: step 1/4. The protein operates within amino-acid biosynthesis; L-valine biosynthesis; L-valine from pyruvate: step 1/4. This is Acetolactate synthase large subunit (ilvB) from Parasynechococcus marenigrum (strain WH8102).